Reading from the N-terminus, the 494-residue chain is DEAD-box ATP-dependent RNA helicase CshA (494 aa).

A Q motif motif is present at residues 3-31 (ITFQDFNLSSDLMKAINRMGFEEATPIQA). In terms of domain architecture, Helicase ATP-binding spans 34-204 (IPLGLSNKDV…ERFMTEPEHV (171 aa)). Position 47 to 54 (47 to 54 (AQTGTGKT)) interacts with ATP. The DEAD box signature appears at 152 to 155 (DEAD). Residues 215–375 (NIQQFYLEVQ…RMKEPTLDEA (161 aa)) enclose the Helicase C-terminal domain. Residues 413 to 494 (VTVVAAAIKM…SGDRRQKKSY (82 aa)) form a required for dimerization or oligomerization region. The disordered stretch occupies residues 429 to 494 (DTPVRLTDEA…SGDRRQKKSY (66 aa)). Residues 443–452 (KRYKNQRSSK) are compositionally biased toward basic residues. Positions 473 to 488 (SYDKKRSNDRRSSGDR) are enriched in basic and acidic residues.

Belongs to the DEAD box helicase family. CshA subfamily. As to quaternary structure, homodimer or oligomer. May interact with RNA helicases CshB and DbpA (DeaD). Probably a component of the RNA degradosome complex composed of rny, rnjA, rnjB, pnp, pfkA and eno, and possibly also rnpA (although rnjA and rnjB's presence is unclear). Interacts with ribosomal proteins L1 and L3 (rplA and rplC) and the protein component of RNase RnpA. Interacts with the RNA polymerase core. The cofactor is Mg(2+).

The protein localises to the cytoplasm. The protein resides in the nucleoid. It is found in the cell membrane. It catalyses the reaction ATP + H2O = ADP + phosphate + H(+). Its activity is regulated as follows. RNA helicase activity is inhibited by EDTA. Its function is as follows. The most abundant DEAD-box RNA helicase. An ATP-dependent RNA helicase with RNA-dependent ATPase activity. May work in conjunction with the cold shock proteins to ensure proper initiation of transcription at low and optimal temperatures. In vitro, unwinds dsRNA in both 5'- and 3'- directions. Plays a role in ribosomal 50S subunit assembly. Its deletion leads to changes in mRNA levels for over 200 transcripts. This Bacillus subtilis (strain 168) protein is DEAD-box ATP-dependent RNA helicase CshA.